The following is a 764-amino-acid chain: Phenylalanine--tRNA ligase beta subunit (764 aa).

Residues 38 to 148 (CIAPKNVVVG…GELVLGKELN (111 aa)) enclose the tRNA-binding domain. The B5 domain maps to 375–455 (LKDRTLTFQL…RFVGIDNLVS (81 aa)). The Mg(2+) site is built by aspartate 433, aspartate 439, glutamate 442, and glutamate 443. Residues 673–763 (SIYPSSVRDL…LEKEFNARLK (91 aa)) enclose the FDX-ACB domain.

This sequence belongs to the phenylalanyl-tRNA synthetase beta subunit family. Type 1 subfamily. As to quaternary structure, tetramer of two alpha and two beta subunits. It depends on Mg(2+) as a cofactor.

It is found in the cytoplasm. It catalyses the reaction tRNA(Phe) + L-phenylalanine + ATP = L-phenylalanyl-tRNA(Phe) + AMP + diphosphate + H(+). The chain is Phenylalanine--tRNA ligase beta subunit (pheT) from Helicobacter pylori (strain ATCC 700392 / 26695) (Campylobacter pylori).